A 197-amino-acid chain; its full sequence is Phospholipid hydroperoxide glutathione peroxidase (197 aa).

S40 is subject to Phosphoserine. U73 is an active-site residue. Residue U73 is a non-standard amino acid, selenocysteine. V78 is modified (phosphoserine).

The protein belongs to the glutathione peroxidase family. As to quaternary structure, monomer. Has a tendency to form higher mass oligomers. Interacts with FUNDC1; this interaction promotes GPX4 recruitment into mitochondria through TOM/TIM complex where it is degraded by mitophagy. Present primarily in testis. Expressed in flagella of epididymal sperm. Isoform Cytoplasmic: Highly expressed in testis. Present in spermatogonia, spermatocyte and spermatid (at protein level).

It is found in the nucleus. The protein resides in the nucleolus. Its subcellular location is the mitochondrion. It localises to the cytoplasm. The enzyme catalyses a hydroperoxy polyunsaturated fatty acid + 2 glutathione = a hydroxy polyunsaturated fatty acid + glutathione disulfide + H2O. The catalysed reaction is 2 glutathione + H2O2 = glutathione disulfide + 2 H2O. It carries out the reaction tert-butyl hydroperoxide + 2 glutathione = tert-butanol + glutathione disulfide + H2O. It catalyses the reaction cumene hydroperoxide + 2 glutathione = 2-phenylpropan-2-ol + glutathione disulfide + H2O. The enzyme catalyses (9S)-hydroperoxy-(10E,12Z)-octadecadienoate + 2 glutathione = (9S)-hydroxy-(10E,12Z)-octadecadienoate + glutathione disulfide + H2O. The catalysed reaction is (13S)-hydroperoxy-(9Z,11E)-octadecadienoate + 2 glutathione = (13S)-hydroxy-(9Z,11E)-octadecadienoate + glutathione disulfide + H2O. It carries out the reaction (5S)-hydroperoxy-(6E,8Z,11Z,14Z)-eicosatetraenoate + 2 glutathione = (5S)-hydroxy-(6E,8Z,11Z,14Z)-eicosatetraenoate + glutathione disulfide + H2O. It catalyses the reaction (12R)-hydroperoxy-(5Z,8Z,10E,14Z)-eicosatetraenoate + 2 glutathione = (12R)-hydroxy-(5Z,8Z,10E,14Z)-eicosatetraenoate + glutathione disulfide + H2O. The enzyme catalyses (12S)-hydroperoxy-(5Z,8Z,10E,14Z)-eicosatetraenoate + 2 glutathione = (12S)-hydroxy-(5Z,8Z,10E,14Z)-eicosatetraenoate + glutathione disulfide + H2O. The catalysed reaction is (15S)-hydroperoxy-(5Z,8Z,11Z,13E)-eicosatetraenoate + 2 glutathione = (15S)-hydroxy-(5Z,8Z,11Z,13E)-eicosatetraenoate + glutathione disulfide + H2O. It carries out the reaction (5S)-hydroperoxy-(6E,8Z,11Z,14Z,17Z)-eicosapentaenoate + 2 glutathione = (5S)-hydroxy-(6E,8Z,11Z,14Z,17Z)-eicosapentaenoate + glutathione disulfide + H2O. It catalyses the reaction (12S)-hydroperoxy-(5Z,8Z,10E,14Z,17Z)-eicosapentaenoate + 2 glutathione = (12S)-hydroxy-(5Z,8Z,10E,14Z,17Z)-eicosapentaenoate + glutathione disulfide + H2O. The enzyme catalyses (15S)-hydroperoxy-(5Z,8Z,11Z,13E,17Z)-eicosapentaenoate + 2 glutathione = (15S)-hydroxy-(5Z,8Z,11Z,13E,17Z)-eicosapentaenoate + glutathione disulfide + H2O. The catalysed reaction is (15S)-hydroperoxy-(11Z,13E)-eicosadienoate + 2 glutathione = (15S)-hydroxy-(11Z,13E)-eicosadienoate + glutathione disulfide + H2O. It carries out the reaction (17S)-hydroperoxy-(4Z,7Z,10Z,13Z,15E,19Z)-docosahexaenoate + 2 glutathione = (17S)-hydroxy-(4Z,7Z,10Z,13Z,15E,19Z)-docosahexaenoate + glutathione disulfide + H2O. It catalyses the reaction a hydroperoxy-1,2-diacyl-glycero-3-phosphocholine + 2 glutathione = a hydroxy-1,2-diacyl-glycero-3-phosphocholine + glutathione disulfide + H2O. Essential antioxidant peroxidase that directly reduces phospholipid hydroperoxide even if they are incorporated in membranes and lipoproteins. Can also reduce fatty acid hydroperoxide, cholesterol hydroperoxide and thymine hydroperoxide. Plays a key role in protecting cells from oxidative damage by preventing membrane lipid peroxidation. Required to prevent cells from ferroptosis, a non-apoptotic cell death resulting from an iron-dependent accumulation of lipid reactive oxygen species. The presence of selenocysteine (Sec) versus Cys at the active site is essential for life: it provides resistance to overoxidation and prevents cells against ferroptosis. The presence of Sec at the active site is also essential for the survival of a specific type of parvalbumin-positive interneurons, thereby preventing against fatal epileptic seizures. May be required to protect cells from the toxicity of ingested lipid hydroperoxides. Required for normal sperm development and male fertility. Essential for maturation and survival of photoreceptor cells. Plays a role in a primary T-cell response to viral and parasitic infection by protecting T-cells from ferroptosis and by supporting T-cell expansion. Plays a role of glutathione peroxidase in platelets in the arachidonic acid metabolism. Reduces hydroperoxy ester lipids formed by a 15-lipoxygenase that may play a role as down-regulator of the cellular 15-lipoxygenase pathway. Can also reduce small soluble hydroperoxides such as H2O2, cumene hydroperoxide and tert-butyl hydroperoxide. In terms of biological role, specifically able to suppress the production of leukotriene and prostaglandin in response to several stimuli by reducing fatty acid hydroperoxide. Functionally, specifically required to prevent mitochondrial cell death by mediating reduction of cardiolipin hydroperoxide. Also required for normal sperm development and male fertility. Its function is as follows. Required for male fertility by stabilizing the condensed chromatin in sperm nuclei. This Rattus norvegicus (Rat) protein is Phospholipid hydroperoxide glutathione peroxidase.